Consider the following 35-residue polypeptide: Photosystem II reaction center protein T (35 aa).

The helical transmembrane segment at 3–23 threads the bilayer; that stretch reads ALVYTFLLXSTLGIIFFAIFF.

This sequence belongs to the PsbT family. PSII is composed of 1 copy each of membrane proteins PsbA, PsbB, PsbC, PsbD, PsbE, PsbF, PsbH, PsbI, PsbJ, PsbK, PsbL, PsbM, PsbT, PsbY, PsbZ, Psb30/Ycf12, at least 3 peripheral proteins of the oxygen-evolving complex and a large number of cofactors. It forms dimeric complexes.

Its subcellular location is the plastid. It is found in the chloroplast thylakoid membrane. Its function is as follows. Found at the monomer-monomer interface of the photosystem II (PS II) dimer, plays a role in assembly and dimerization of PSII. PSII is a light-driven water plastoquinone oxidoreductase, using light energy to abstract electrons from H(2)O, generating a proton gradient subsequently used for ATP formation. The polypeptide is Photosystem II reaction center protein T (Cunninghamia lanceolata (China fir)).